The chain runs to 112 residues: T cell receptor alpha variable 17 (112 aa).

An N-terminal signal peptide occupies residues 1 to 21; the sequence is METLLGVSLVILWLQLARVNS. The Ig-like domain maps to 22-112; it reads QQGEEDPQAL…DTASYFCATD (91 aa). N-linked (GlcNAc...) asparagine glycosylation is found at asparagine 38 and asparagine 42. Cysteines 43 and 109 form a disulfide.

As to quaternary structure, alpha-beta TR is a heterodimer composed of an alpha and beta chain; disulfide-linked. The alpha-beta TR is associated with the transmembrane signaling CD3 coreceptor proteins to form the TR-CD3 (TcR or TCR). The assembly of alpha-beta TR heterodimers with CD3 occurs in the endoplasmic reticulum where a single alpha-beta TR heterodimer associates with one CD3D-CD3E heterodimer, one CD3G-CD3E heterodimer and one CD247 homodimer forming a stable octameric structure. CD3D-CD3E and CD3G-CD3E heterodimers preferentially associate with TR alpha and TR beta chains, respectively. The association of the CD247 homodimer is the last step of TcR assembly in the endoplasmic reticulum and is required for transport to the cell surface.

The protein localises to the cell membrane. V region of the variable domain of T cell receptor (TR) alpha chain that participates in the antigen recognition. Alpha-beta T cell receptors are antigen specific receptors which are essential to the immune response and are present on the cell surface of T lymphocytes. Recognize peptide-major histocompatibility (MH) (pMH) complexes that are displayed by antigen presenting cells (APC), a prerequisite for efficient T cell adaptive immunity against pathogens. Binding of alpha-beta TR to pMH complex initiates TR-CD3 clustering on the cell surface and intracellular activation of LCK that phosphorylates the ITAM motifs of CD3G, CD3D, CD3E and CD247 enabling the recruitment of ZAP70. In turn ZAP70 phosphorylates LAT, which recruits numerous signaling molecules to form the LAT signalosome. The LAT signalosome propagates signal branching to three major signaling pathways, the calcium, the mitogen-activated protein kinase (MAPK) kinase and the nuclear factor NF-kappa-B (NF-kB) pathways, leading to the mobilization of transcription factors that are critical for gene expression and essential for T cell growth and differentiation. The T cell repertoire is generated in the thymus, by V-(D)-J rearrangement. This repertoire is then shaped by intrathymic selection events to generate a peripheral T cell pool of self-MH restricted, non-autoaggressive T cells. Post-thymic interaction of alpha-beta TR with the pMH complexes shapes TR structural and functional avidity. In Homo sapiens (Human), this protein is T cell receptor alpha variable 17.